We begin with the raw amino-acid sequence, 94 residues long: MKILAVVLISVIVLNTANGENYYPQKYTNDYYGCQKQTDAFCDKVCKLHLADSGFCDQSWGLAKACKCVNVSYDNSFFFNALESQCPLLNKSAA.

The N-terminal stretch at 1–19 (MKILAVVLISVIVLNTANG) is a signal peptide. One can recognise an LCN-type CS-alpha/beta domain in the interval 20 to 87 (ENYYPQKYTN…FFNALESQCP (68 aa)). 3 disulfides stabilise this stretch: Cys34/Cys56, Cys42/Cys66, and Cys46/Cys68.

It belongs to the long (3 C-C) scorpion toxin superfamily. As to quaternary structure, homodimer; disulfide-linked or monomer (edited version) or heterodimer of an alpha chain (AC D9U299 or AC D9U2A4) and this beta chain (non-edited version). As to expression, expressed by the venom gland.

Its subcellular location is the secreted. Functionally, the homodimer inhibits HMG-CoA reductase (HMGCR) (32% of inhibition produced by 0.6 uM), a glycoprotein involved in the control of cholesterol biosynthesis. The inhibitory effects of bumarsin are seen at much lower concentrations (0.6 uM) than that for statins such as atorvastatin (5 mM) and simvastatin (10 uM). In addition to inhibition of HMG-CoA reductase, this protein lowers cholesterol levels by inducing steroid hormone synthesis via StAR, and by increasing reverse cholesterol transport mediated by the induction of ABCA1 and APOA1. The heterodimer non-edited LVP1 induces lipolysis in rat adipocytes. Induction of lipolysis by LVP1 appears to be mediated through the beta-2 adrenergic receptor pathway (ADRB2). Its function is as follows. The monomer edited version, similar to alpha-toxins, may modulate voltage-gated sodium channels (Nav) and may block voltage-gated potassium channels (Kv). The protein is Lipolysis-activating peptide 1-beta chain of Lychas mucronatus (Chinese swimming scorpion).